The chain runs to 155 residues: UPF0225 protein ECA2332 (155 aa).

The protein belongs to the UPF0225 family.

The sequence is that of UPF0225 protein ECA2332 from Pectobacterium atrosepticum (strain SCRI 1043 / ATCC BAA-672) (Erwinia carotovora subsp. atroseptica).